The primary structure comprises 1628 residues: Lysine-specific histone demethylase 1 homolog 3 (1628 aa).

Residues 1-71 (MDGKEKKSGS…KKLSALGKDS (71 aa)) form a disordered region. The span at 19–28 (FDDDADDDEP) shows a compositional bias: acidic residues. Residues 43-64 (KDKVETESTGKQRQKQVVEKKL) show a composition bias toward basic and acidic residues. Residues 378–478 (GRAAAVTAGL…AGISSVNGKA (101 aa)) form the SWIRM domain. Glu-647, Arg-649, Arg-655, and Glu-1077 together coordinate FAD. Residues 1271–1317 (SGKKSLRQANTTNTSRIRRKLNSPDTDSKGKLSNGNDVKTDEEFEDN) form a disordered region.

It belongs to the flavin monoamine oxidase family. It depends on FAD as a cofactor.

Probable histone demethylase that reduces the levels of histone H3 'Lys-4' methylation in chromatin. This chain is Lysine-specific histone demethylase 1 homolog 3 (LDL3), found in Arabidopsis thaliana (Mouse-ear cress).